A 354-amino-acid polypeptide reads, in one-letter code: Methylthioribose-1-phosphate isomerase (354 aa).

Residues 58 to 60 (RGA), arginine 101, and glutamine 204 each bind substrate. Aspartate 245 acts as the Proton donor in catalysis. A substrate-binding site is contributed by 255 to 256 (NK).

The protein belongs to the eIF-2B alpha/beta/delta subunits family. MtnA subfamily.

It carries out the reaction 5-(methylsulfanyl)-alpha-D-ribose 1-phosphate = 5-(methylsulfanyl)-D-ribulose 1-phosphate. Its pathway is amino-acid biosynthesis; L-methionine biosynthesis via salvage pathway; L-methionine from S-methyl-5-thio-alpha-D-ribose 1-phosphate: step 1/6. Its function is as follows. Catalyzes the interconversion of methylthioribose-1-phosphate (MTR-1-P) into methylthioribulose-1-phosphate (MTRu-1-P). The polypeptide is Methylthioribose-1-phosphate isomerase (Xylella fastidiosa (strain M12)).